A 237-amino-acid chain; its full sequence is Phosphoribosylaminoimidazole-succinocarboxamide synthase (237 aa).

It belongs to the SAICAR synthetase family.

It carries out the reaction 5-amino-1-(5-phospho-D-ribosyl)imidazole-4-carboxylate + L-aspartate + ATP = (2S)-2-[5-amino-1-(5-phospho-beta-D-ribosyl)imidazole-4-carboxamido]succinate + ADP + phosphate + 2 H(+). Its pathway is purine metabolism; IMP biosynthesis via de novo pathway; 5-amino-1-(5-phospho-D-ribosyl)imidazole-4-carboxamide from 5-amino-1-(5-phospho-D-ribosyl)imidazole-4-carboxylate: step 1/2. This Idiomarina loihiensis (strain ATCC BAA-735 / DSM 15497 / L2-TR) protein is Phosphoribosylaminoimidazole-succinocarboxamide synthase.